A 1027-amino-acid polypeptide reads, in one-letter code: Contactin-5 (1027 aa).

The signal sequence occupies residues 1–19; the sequence is MMWLSWKLFLFLSLIGCLS. 6 Ig-like C2-type domains span residues 32–117, 123–209, 227–307, 317–401, 407–494, and 498–593; these read PDDV…AVLQ, NFSG…RVLS, PKIE…RNVF, PQWV…AELK, PTFP…ASVS, and PTRI…TELL. A disulfide bridge links Cys50 with Cys100. N-linked (GlcNAc...) asparagine glycans are attached at residues Asn65 and Asn123. Intrachain disulfides connect Cys144/Cys196 and Cys249/Cys296. Asn324, Asn376, and Asn467 each carry an N-linked (GlcNAc...) asparagine glycan. Cystine bridges form between Cys338–Cys385, Cys430–Cys478, and Cys520–Cys577. Fibronectin type-III domains are found at residues 600–698, 703–800, 805–899, and 901–994; these read PPGV…TNEA, PPAN…SAEG, APID…TKKS, and PSQA…SYAG. N-linked (GlcNAc...) asparagine glycosylation is found at Asn706, Asn743, Asn858, and Asn929. Ser999 carries the GPI-anchor amidated serine lipid modification. The propeptide at 1000 to 1027 is removed in mature form; sequence AQSTLHMFSTSSSSVTLLLVLMVPSTSW.

This sequence belongs to the immunoglobulin superfamily. Contactin family. Interacts with INgCAM/L1 and the tenascin-R TNP protein. Does not interacts with NrCAM. Expressed by subpopulations of Purkinje cells in the cerebellum. Also expressed by one type of Purkinje cell afferents, the climbing fibers.

It localises to the cell membrane. Contactins mediate cell surface interactions during nervous system development. May contribute to the formation of somatotopic maps of cerebellar afferents during the development of the nervous system. This Gallus gallus (Chicken) protein is Contactin-5 (CNTN5).